The chain runs to 759 residues: Rab guanine nucleotide exchange factor SEC2 (759 aa).

N-acetylmethionine is present on Met1. Residues 26–164 adopt a coiled-coil conformation; that stretch reads DKQSHLEEQL…KKVMHSLDNE (139 aa). Thr168 is modified (phosphothreonine). A Phosphoserine modification is found at Ser171. Residues 451–508 are required for proper polarized localization of the protein; that stretch reads TKNKPKMEIFSSETNAKPGQPTTNIQRAWLQLCKLRCILHWTHIGIWAVDDSISSKIG. A Phosphoserine modification is found at Ser515. The disordered stretch occupies residues 538–759; that stretch reads KRPFSSSSAE…DNFDDAQEQQ (222 aa). Over residues 555 to 576 the composition is skewed to acidic residues; it reads FDFESGDMENEITGESSSDESS. Low complexity-rich tracts occupy residues 577–589 and 597–612; these read SDGS…TADS and LADS…SPES. Residues 648-664 show a composition bias toward basic residues; the sequence is RSIIKKKAPQRKIQKKK. Positions 651-682 form a coiled coil; it reads IKKKAPQRKIQKKKLLQDLDDLEEQFREESAI. The segment covering 690 to 703 has biased composition (polar residues); the sequence is AESNVKQNISSKRA. Over residues 704-719 the composition is skewed to basic and acidic residues; that stretch reads SSGDENSKKDNNEKTL. Over residues 731–744 the composition is skewed to polar residues; the sequence is EQIGENSPSSGLHA. Residues 732-759 are a coiled coil; that stretch reads QIGENSPSSGLHASSSNDDNFDDAQEQQ. A compositionally biased stretch (acidic residues) spans 750–759; sequence DNFDDAQEQQ.

This sequence belongs to the SEC2 family. As to quaternary structure, interacts with SEC4. Interacts with YPT32, preferentially in its GTP-bound form.

The protein localises to the bud neck. It is found in the bud tip. It localises to the cytoplasmic vesicle. Its subcellular location is the secretory vesicle. Functionally, guanine nucleotide exchange factor for SEC4, catalyzing the dissociation of GDP from SEC4 and also potently promoting binding of GTP. Activation of SEC4 by SEC2 is needed for the directed transport of vesicles to sites of exocytosis. Binds the Rab GTPase YPT32, but does not have exchange activity on YPT32. The sequence is that of Rab guanine nucleotide exchange factor SEC2 (SEC2) from Saccharomyces cerevisiae (strain ATCC 204508 / S288c) (Baker's yeast).